The following is a 334-amino-acid chain: Malate dehydrogenase 2 (334 aa).

19 to 25 (IGAGKVG) contributes to the NAD(+) binding site. The substrate site is built by Arg-100 and Arg-106. Residues Asn-113 and 136–138 (VSN) contribute to the NAD(+) site. Positions 138 and 169 each coordinate substrate. His-193 serves as the catalytic Proton acceptor.

It belongs to the LDH/MDH superfamily.

The catalysed reaction is (S)-malate + NAD(+) = oxaloacetate + NADH + H(+). Functionally, catalyzes the reversible oxidation of malate to oxaloacetate. The chain is Malate dehydrogenase 2 from Aquifex aeolicus (strain VF5).